The sequence spans 1998 residues: Histone acetyltransferase KAT6A (1998 aa).

The SAMD1-like winged helix (WH) domain occupies 1–77 (MVKLANPLYT…LNSYKDPDNP (77 aa)). Residues 1-144 (MVKLANPLYT…CGGTAASGFH (144 aa)) are required for activation of RUNX1-1. The segment at 52 to 166 (ELSVKDGTIL…HGRLLKDGPL (115 aa)) is required for nuclear localization. The interval 72 to 93 (KDPDNPGRIALPKPRNHGKLDN) is disordered. An H15 domain is found at 95 to 171 (QSVDWNKLLK…KDGPLYRLNT (77 aa)). The tract at residues 144-662 (HQQLRLAIKR…RKGYGRFLID (519 aa)) is interaction with PML. At K172 the chain carries N6-acetyllysine. 2 PHD-type zinc fingers span residues 199 to 258 (DKPV…LRWQ) and 255 to 306 (LRWQ…GMWI). The interval 312–662 (PRKKGRKLLQ…RKGYGRFLID (351 aa)) is interaction with RUNX1-1. A disordered region spans residues 336–377 (GRPKNRLKKQSTVSKGPFSKVRTGPGRGRKRKITVSSQSASS). An N6-acetyllysine mark is found at K350 and K355. T369 bears the Phosphothreonine; by PKB/AKT1 mark. Position 419 is a phosphoserine (S419). The tract at residues 440 to 464 (KGNRKSSTSHWPTDNQDGWESKQES) is disordered. Over residues 444-457 (KSSTSHWPTDNQDG) the composition is skewed to polar residues. S471 is modified (phosphoserine). The segment at 486–776 (IQEQALQKVG…VDPECLRWTP (291 aa)) is catalytic. Residues 502–776 (PQVRCPSVIE…VDPECLRWTP (275 aa)) enclose the MYST-type HAT domain. Positions 505–808 (RCPSVIEFGK…EPQGQERELE (304 aa)) are mediates interaction with BRPF1, required for histone H3 acetyltransferase activity. Residues 535–560 (LYLCEFCLKYMKSRTILQQHMKKCGW) form a C2HC MYST-type zinc finger. At K602 the chain carries N6-acetyllysine; by autocatalysis. Acetyl-CoA-binding positions include 643–647 (SCIMI) and 652–658 (QRKGYGR). The active-site Proton donor/acceptor is the E678. S682 lines the acetyl-CoA pocket. Residues 783–947 (VVSEEEDEEA…RFSESADLWR (165 aa)) are disordered. S785 carries the phosphoserine modification. Positions 785-797 (SEEEDEEADDGEK) are enriched in acidic residues. The span at 798–840 (EEPQGQERELETRERVGKSVSRENKDQDSSSLIESEKKPEVKE) shows a compositional bias: basic and acidic residues. K815 bears the N6-acetyllysine mark. Residue K835 forms a Glycyl lysine isopeptide (Lys-Gly) (interchain with G-Cter in SUMO2) linkage. Residues 865-874 (RRGRCGRKNR) show a composition bias toward basic residues. Basic and acidic residues predominate over residues 875-886 (KTQERFGDKDSK). Y900 is subject to Phosphotyrosine. Over residues 903–916 (CEEKSAASRERYTE) the composition is skewed to basic and acidic residues. Residues S940 and S953 each carry the phosphoserine modification. The segment at 982–1079 (GFSESSEEEE…EEEEDENELF (98 aa)) is disordered. The residue at position 1006 (K1006) is an N6-acetyllysine. Residues 1008 to 1029 (TLKRKKPILHRRRRVRKRKHHN) show a composition bias toward basic residues. The segment covering 1030–1041 (SSVVTETISETT) has biased composition (low complexity). Composition is skewed to acidic residues over residues 1042–1052 (EVLDEPFEDSD) and 1064–1077 (FEIE…DENE). S1088, S1089, and S1114 each carry phosphoserine. Disordered regions lie at residues 1096-1175 (QASS…PGFK), 1195-1436 (PIKP…EGAY), 1450-1567 (QSYT…STMG), and 1630-1702 (TCVV…CSMN). Over residues 1106-1119 (DEEEEEEESDDADD) the composition is skewed to acidic residues. Over residues 1135 to 1146 (NSASLEPDTSTP) the composition is skewed to polar residues. The span at 1147–1173 (MKKKKGWPKGKSRKPIHWKKRPGRKPG) shows a compositional bias: basic residues. The span at 1203 to 1228 (RTQESEELVEVKEGLVEERKEEMHTE) shows a compositional bias: basic and acidic residues. 2 stretches are compositionally biased toward acidic residues: residues 1229–1240 (ADEEAEEEEDAA) and 1281–1298 (EEPQ…DEVT). Basic and acidic residues-rich tracts occupy residues 1316–1333 (HLDS…ARED), 1351–1360 (DSRENAKDKD), and 1392–1413 (DSNT…HSEL). The segment covering 1472 to 1496 (HNSPISSIPSHPSQSVRSVSSPSMP) has biased composition (low complexity). The span at 1501–1522 (GYTQISPEQGSLSAPSMQNMET) shows a compositional bias: polar residues. The tract at residues 1510 to 1635 (GSLSAPSMQN…KSPQTCVVER (126 aa)) is interaction with RUNX1-2. The segment at 1510–1735 (GSLSAPSMQN…YERIPGDFGA (226 aa)) is interaction with PML. The segment covering 1527–1541 (DVPSVSDHSQQVVDS) has biased composition (low complexity). The span at 1549-1567 (IESTTENYENPSSYDSTMG) shows a compositional bias: polar residues. Pro residues-rich tracts occupy residues 1639–1658 (NQQP…PQPQ) and 1665–1693 (PQPP…PQQQ). The segment at 1907 to 1942 (SMNMNTLNAMNSYRMTQPMMNSSYHSNPAYMNQTAQ) is required for activation of RUNX1-2.

The protein belongs to the MYST (SAS/MOZ) family. As to quaternary structure, component of the MOZ/MORF complex composed at least of ING5, KAT6A, KAT6B, MEAF6 and one of BRPF1, BRD1/BRPF2 and BRPF3. Interacts with RUNX1; phosphorylation of RUNX1 enhances the interaction. Interacts with RUNX2. Interacts with p53/TP53. Interacts with PML and this interaction positively regulates its acetylation activity towards p53/TP53. In terms of processing, autoacetylated. Autoacetylation at Lys-602 is required for proper function. Phosphorylation at Thr-369 by PKB/AKT1 inhibits its interaction with PML and negatively regulates its acetylation activity towards p53/TP53.

The protein localises to the nucleus. It localises to the nucleolus. It is found in the nucleoplasm. The protein resides in the PML body. It catalyses the reaction L-lysyl-[protein] + acetyl-CoA = N(6)-acetyl-L-lysyl-[protein] + CoA + H(+). Histone acetyltransferase that acetylates lysine residues in histone H3 and histone H4 (in vitro). Component of the MOZ/MORF complex which has a histone H3 acetyltransferase activity. May act as a transcriptional coactivator for RUNX1 and RUNX2. Acetylates p53/TP53 at 'Lys-120' and 'Lys-382' and controls its transcriptional activity via association with PML. In Rattus norvegicus (Rat), this protein is Histone acetyltransferase KAT6A (Kat6a).